The following is a 279-amino-acid chain: Coiled-coil domain-containing protein 117 (279 aa).

Residues 1 to 82 are disordered; it reads MAALGRPFSG…REEEEDDDCP (82 aa). R48 carries the omega-N-methylarginine modification. S53 is modified (phosphoserine). Positions 63 to 72 are enriched in basic residues; sequence VSVHCKKKHK. Residues 141–168 are a coiled coil; it reads QCEVARRKLQEIEDRIIDEDEEVEADRN. Positions 217 to 279 are disordered; it reads LLSDKPKPSS…ATSTEEEMEL (63 aa). Composition is skewed to polar residues over residues 224–235 and 262–272; these read PSSNTKNYTGES and SLYNSLETATS.

Interacts with CIAO2B; the interaction is direct. Interacts with MMS19; the interaction is indirect.

The protein localises to the cytoplasm. Its subcellular location is the cytoskeleton. The protein resides in the spindle. It is found in the nucleus. Its function is as follows. Facilitates DNA repair, cell cycle progression, and cell proliferation through its interaction with CIAO2B. The chain is Coiled-coil domain-containing protein 117 from Homo sapiens (Human).